The primary structure comprises 267 residues: Putative [LysW]-aminoadipate/[LysW]-glutamate kinase (267 aa).

Residues 37-38, R64, and N169 each bind substrate; that span reads GG.

The protein belongs to the acetylglutamate kinase family. LysZ subfamily.

The protein resides in the cytoplasm. It carries out the reaction [amino-group carrier protein]-C-terminal-N-(1,4-dicarboxybutan-1-yl)-L-glutamine + ATP = [amino-group carrier protein]-C-terminal-N-(1-carboxy-5-phosphooxy-5-oxopentan-1-yl)-L-glutamine + ADP. It catalyses the reaction [amino-group carrier protein]-C-terminal-gamma-(L-glutamyl)-L-glutamate + ATP = [amino-group carrier protein]-C-terminal-gamma-(5-phospho-L-glutamyl)-L-glutamate + ADP. It functions in the pathway amino-acid biosynthesis; L-lysine biosynthesis via AAA pathway; L-lysine from L-alpha-aminoadipate (Thermus route): step 2/5. Its pathway is amino-acid biosynthesis; L-arginine biosynthesis. In terms of biological role, involved in both the arginine and lysine biosynthetic pathways. Phosphorylates the LysW-bound precursors glutamate (for arginine biosynthesis), respectively alpha-aminoadipate (for lysine biosynthesis). The sequence is that of Putative [LysW]-aminoadipate/[LysW]-glutamate kinase from Nitrosopumilus maritimus (strain SCM1).